The sequence spans 941 residues: MutS protein homolog 1 (941 aa).

747–754 (GPNMAGKS) provides a ligand contact to ATP.

It belongs to the DNA mismatch repair MutS family.

It localises to the cytoplasm. The protein resides in the mitochondrion. In terms of biological role, involved in mitochondrial DNA repair. The polypeptide is MutS protein homolog 1 (msh1) (Schizosaccharomyces pombe (strain 972 / ATCC 24843) (Fission yeast)).